The following is a 385-amino-acid chain: S-adenosylmethionine synthase (385 aa).

H14 contacts ATP. Residue D16 participates in Mg(2+) binding. E42 is a binding site for K(+). E55 and Q98 together coordinate L-methionine. The interval 98 to 108 (QSGDIAQAVDN) is flexible loop. ATP-binding positions include 165 to 167 (DAK), 232 to 233 (RF), D241, 247 to 248 (RK), A264, and K268. An L-methionine-binding site is contributed by D241. K272 is a binding site for L-methionine.

The protein belongs to the AdoMet synthase family. In terms of assembly, homotetramer; dimer of dimers. Mg(2+) is required as a cofactor. The cofactor is K(+).

It is found in the cytoplasm. It catalyses the reaction L-methionine + ATP + H2O = S-adenosyl-L-methionine + phosphate + diphosphate. Its pathway is amino-acid biosynthesis; S-adenosyl-L-methionine biosynthesis; S-adenosyl-L-methionine from L-methionine: step 1/1. Functionally, catalyzes the formation of S-adenosylmethionine (AdoMet) from methionine and ATP. The overall synthetic reaction is composed of two sequential steps, AdoMet formation and the subsequent tripolyphosphate hydrolysis which occurs prior to release of AdoMet from the enzyme. In Leuconostoc mesenteroides subsp. mesenteroides (strain ATCC 8293 / DSM 20343 / BCRC 11652 / CCM 1803 / JCM 6124 / NCDO 523 / NBRC 100496 / NCIMB 8023 / NCTC 12954 / NRRL B-1118 / 37Y), this protein is S-adenosylmethionine synthase.